A 170-amino-acid chain; its full sequence is Phosphopantetheine adenylyltransferase (170 aa).

Residue S14 coordinates substrate. ATP is bound by residues 14-15 and H22; that span reads SF. 3 residues coordinate substrate: K46, L79, and R93. ATP-binding positions include 94 to 96, E104, and 129 to 135; these read GIR and IAEVSST.

The protein belongs to the bacterial CoaD family. As to quaternary structure, homohexamer. Mg(2+) serves as cofactor.

It is found in the cytoplasm. The enzyme catalyses (R)-4'-phosphopantetheine + ATP + H(+) = 3'-dephospho-CoA + diphosphate. Its pathway is cofactor biosynthesis; coenzyme A biosynthesis; CoA from (R)-pantothenate: step 4/5. In terms of biological role, reversibly transfers an adenylyl group from ATP to 4'-phosphopantetheine, yielding dephospho-CoA (dPCoA) and pyrophosphate. This Neisseria meningitidis serogroup C (strain 053442) protein is Phosphopantetheine adenylyltransferase.